Consider the following 180-residue polypeptide: ATP-dependent protease subunit HslV (180 aa).

Thr-5 is a catalytic residue. Na(+) is bound by residues Gly-165, Cys-168, and Thr-171.

It belongs to the peptidase T1B family. HslV subfamily. As to quaternary structure, a double ring-shaped homohexamer of HslV is capped on each side by a ring-shaped HslU homohexamer. The assembly of the HslU/HslV complex is dependent on binding of ATP.

The protein resides in the cytoplasm. It carries out the reaction ATP-dependent cleavage of peptide bonds with broad specificity.. With respect to regulation, allosterically activated by HslU binding. Protease subunit of a proteasome-like degradation complex believed to be a general protein degrading machinery. This Helicobacter pylori (strain G27) protein is ATP-dependent protease subunit HslV.